The chain runs to 729 residues: Fatty acid oxidation complex subunit alpha (729 aa).

An enoyl-CoA hydratase/isomerase region spans residues 1 to 189; sequence MLYQSETLQL…KIGLVDAVVD (189 aa). Asp-296 lines the substrate pocket. A 3-hydroxyacyl-CoA dehydrogenase region spans residues 311–729; sequence AAPKLAAVLG…LLDVSTNQPA (419 aa). Residues Met-324, Asp-343, 400–402, Lys-407, and Ser-429 contribute to the NAD(+) site; that span reads VVE. His-450 acts as the For 3-hydroxyacyl-CoA dehydrogenase activity in catalysis. Asn-453 is an NAD(+) binding site. 2 residues coordinate substrate: Asn-500 and Tyr-660.

The protein in the N-terminal section; belongs to the enoyl-CoA hydratase/isomerase family. This sequence in the C-terminal section; belongs to the 3-hydroxyacyl-CoA dehydrogenase family. In terms of assembly, heterotetramer of two alpha chains (FadB) and two beta chains (FadA).

It catalyses the reaction a (3S)-3-hydroxyacyl-CoA + NAD(+) = a 3-oxoacyl-CoA + NADH + H(+). The catalysed reaction is a (3S)-3-hydroxyacyl-CoA = a (2E)-enoyl-CoA + H2O. It carries out the reaction a 4-saturated-(3S)-3-hydroxyacyl-CoA = a (3E)-enoyl-CoA + H2O. The enzyme catalyses (3S)-3-hydroxybutanoyl-CoA = (3R)-3-hydroxybutanoyl-CoA. It catalyses the reaction a (3Z)-enoyl-CoA = a 4-saturated (2E)-enoyl-CoA. The catalysed reaction is a (3E)-enoyl-CoA = a 4-saturated (2E)-enoyl-CoA. It functions in the pathway lipid metabolism; fatty acid beta-oxidation. Its function is as follows. Involved in the aerobic and anaerobic degradation of long-chain fatty acids via beta-oxidation cycle. Catalyzes the formation of 3-oxoacyl-CoA from enoyl-CoA via L-3-hydroxyacyl-CoA. It can also use D-3-hydroxyacyl-CoA and cis-3-enoyl-CoA as substrate. This Yersinia pestis bv. Antiqua (strain Antiqua) protein is Fatty acid oxidation complex subunit alpha.